A 318-amino-acid polypeptide reads, in one-letter code: Receptor homology region, transmembrane domain- and RING domain-containing protein 6 (318 aa).

Positions 1–20 (MNGSWITILSLLVISQLASS) are cleaved as a signal peptide. Residues 22 to 162 (VTLIGKNTFL…LIPGFGISSW (141 aa)) are Lumenal-facing. The cysteines at positions 62 and 87 are disulfide-linked. Positions 70–143 (EKGSKFRPSY…RTSGEVLKEY (74 aa)) constitute a PA domain. N121 carries an N-linked (GlcNAc...) asparagine glycan. The chain crosses the membrane as a helical span at residues 163–183 (SIMAITFVSLLVISAVLASYF). The Cytoplasmic segment spans residues 184–318 (SVRRHRIRQH…DLPIVVRVYL (135 aa)). An RING-type; atypical zinc finger spans residues 233-275 (CAICIDDYRVGEILRILPCKHKYHAVCIDSWLGRCRSFCPVCK).

It localises to the prevacuolar compartment membrane. The protein resides in the protein storage vacuole membrane. In terms of biological role, involved in the trafficking of vacuolar proteins. May function as a sorting receptor for protein trafficking to the protein storage vacuole (PSV). This is Receptor homology region, transmembrane domain- and RING domain-containing protein 6 (RMR6) from Arabidopsis thaliana (Mouse-ear cress).